The chain runs to 512 residues: Glutamyl-tRNA(Gln) amidotransferase subunit A (512 aa).

Catalysis depends on charge relay system residues Lys82 and Ser157. Residue Ser181 is the Acyl-ester intermediate of the active site.

Belongs to the amidase family. GatA subfamily. Heterotrimer of A, B and C subunits.

The catalysed reaction is L-glutamyl-tRNA(Gln) + L-glutamine + ATP + H2O = L-glutaminyl-tRNA(Gln) + L-glutamate + ADP + phosphate + H(+). Functionally, allows the formation of correctly charged Gln-tRNA(Gln) through the transamidation of misacylated Glu-tRNA(Gln) in organisms which lack glutaminyl-tRNA synthetase. The reaction takes place in the presence of glutamine and ATP through an activated gamma-phospho-Glu-tRNA(Gln). In Bordetella bronchiseptica (strain ATCC BAA-588 / NCTC 13252 / RB50) (Alcaligenes bronchisepticus), this protein is Glutamyl-tRNA(Gln) amidotransferase subunit A.